A 167-amino-acid chain; its full sequence is NADH-quinone oxidoreductase subunit B 1 (167 aa).

Positions 38, 39, 104, and 133 each coordinate [4Fe-4S] cluster.

It belongs to the complex I 20 kDa subunit family. As to quaternary structure, NDH-1 is composed of 14 different subunits. Subunits NuoB, C, D, E, F, and G constitute the peripheral sector of the complex. The cofactor is [4Fe-4S] cluster.

It localises to the cell membrane. It carries out the reaction a quinone + NADH + 5 H(+)(in) = a quinol + NAD(+) + 4 H(+)(out). Functionally, NDH-1 shuttles electrons from NADH, via FMN and iron-sulfur (Fe-S) centers, to quinones in the respiratory chain. The immediate electron acceptor for the enzyme in this species is believed to be ubiquinone. Couples the redox reaction to proton translocation (for every two electrons transferred, four hydrogen ions are translocated across the cytoplasmic membrane), and thus conserves the redox energy in a proton gradient. This chain is NADH-quinone oxidoreductase subunit B 1, found in Roseiflexus castenholzii (strain DSM 13941 / HLO8).